The primary structure comprises 234 residues: Cyclo(L-leucyl-L-leucyl) synthase (234 aa).

Residue S33 is the Nucleophile of the active site. Substrate is bound by residues N36, 179–183 (YIFAE), Y203, and 208–209 (SI).

The protein belongs to the CDPS family.

The catalysed reaction is 2 L-leucyl-tRNA(Leu) = cyclo(L-leucyl-L-leucyl) + 2 tRNA(Leu) + 2 H(+). Functionally, it uses activated amino acids in the form of aminoacyl-tRNAs (aa-tRNAs) as substrates to catalyze the ATP-independent formation of cyclodipeptides which are intermediates in diketopiperazine (DKP) biosynthetic pathways. Catalyzes the formation of cyclo(L-Leu-L-Leu) (cLL) from L-leucyl-tRNA(Leu). Can incorporate various nonpolar residues, such as L-phenylalanine, L-leucine and L-methionine, into cyclodipeptides. This is Cyclo(L-leucyl-L-leucyl) synthase from Photorhabdus laumondii subsp. laumondii (strain DSM 15139 / CIP 105565 / TT01) (Photorhabdus luminescens subsp. laumondii).